The chain runs to 314 residues: 4-hydroxy-3-methylbut-2-enyl diphosphate reductase (314 aa).

[4Fe-4S] cluster is bound at residue Cys-12. (2E)-4-hydroxy-3-methylbut-2-enyl diphosphate-binding residues include His-41 and His-74. Dimethylallyl diphosphate is bound by residues His-41 and His-74. Isopentenyl diphosphate-binding residues include His-41 and His-74. Residue Cys-96 participates in [4Fe-4S] cluster binding. A (2E)-4-hydroxy-3-methylbut-2-enyl diphosphate-binding site is contributed by His-124. Dimethylallyl diphosphate is bound at residue His-124. His-124 serves as a coordination point for isopentenyl diphosphate. Glu-126 functions as the Proton donor in the catalytic mechanism. Thr-167 is a (2E)-4-hydroxy-3-methylbut-2-enyl diphosphate binding site. Cys-197 lines the [4Fe-4S] cluster pocket. (2E)-4-hydroxy-3-methylbut-2-enyl diphosphate is bound by residues Ser-225, Ser-226, Asn-227, and Ser-269. Residues Ser-225, Ser-226, Asn-227, and Ser-269 each contribute to the dimethylallyl diphosphate site. The isopentenyl diphosphate site is built by Ser-225, Ser-226, Asn-227, and Ser-269.

This sequence belongs to the IspH family. [4Fe-4S] cluster serves as cofactor.

The catalysed reaction is isopentenyl diphosphate + 2 oxidized [2Fe-2S]-[ferredoxin] + H2O = (2E)-4-hydroxy-3-methylbut-2-enyl diphosphate + 2 reduced [2Fe-2S]-[ferredoxin] + 2 H(+). It catalyses the reaction dimethylallyl diphosphate + 2 oxidized [2Fe-2S]-[ferredoxin] + H2O = (2E)-4-hydroxy-3-methylbut-2-enyl diphosphate + 2 reduced [2Fe-2S]-[ferredoxin] + 2 H(+). The protein operates within isoprenoid biosynthesis; dimethylallyl diphosphate biosynthesis; dimethylallyl diphosphate from (2E)-4-hydroxy-3-methylbutenyl diphosphate: step 1/1. It participates in isoprenoid biosynthesis; isopentenyl diphosphate biosynthesis via DXP pathway; isopentenyl diphosphate from 1-deoxy-D-xylulose 5-phosphate: step 6/6. Its function is as follows. Catalyzes the conversion of 1-hydroxy-2-methyl-2-(E)-butenyl 4-diphosphate (HMBPP) into a mixture of isopentenyl diphosphate (IPP) and dimethylallyl diphosphate (DMAPP). Acts in the terminal step of the DOXP/MEP pathway for isoprenoid precursor biosynthesis. The polypeptide is 4-hydroxy-3-methylbut-2-enyl diphosphate reductase (Haemophilus influenzae (strain PittGG)).